The following is a 378-amino-acid chain: uncharacterized protein (378 aa).

Cys-16 functions as the For GATase activity in the catalytic mechanism. Residues 16-378 enclose the Glutamine amidotransferase type-2 domain; that stretch reads CGLFGVIDRS…ELAKQLSEVE (363 aa).

This is an uncharacterized protein from Archaeoglobus fulgidus (strain ATCC 49558 / DSM 4304 / JCM 9628 / NBRC 100126 / VC-16).